The chain runs to 740 residues: Polyribonucleotide nucleotidyltransferase (740 aa).

Mg(2+)-binding residues include D492 and D498. The region spanning 559 to 618 (PMVQTLEIQKEKIRDVIGLGGKVIKELCKTFDVEIDISENGEVKVWGNVGENVKKAVQSI) is the KH domain. One can recognise an S1 motif domain in the interval 628-696 (GDIFDGEVVK…HKNRVKLTLR (69 aa)).

It belongs to the polyribonucleotide nucleotidyltransferase family. Mg(2+) is required as a cofactor.

The protein resides in the cytoplasm. It carries out the reaction RNA(n+1) + phosphate = RNA(n) + a ribonucleoside 5'-diphosphate. In terms of biological role, involved in mRNA degradation. Catalyzes the phosphorolysis of single-stranded polyribonucleotides processively in the 3'- to 5'-direction. In Orientia tsutsugamushi (strain Boryong) (Rickettsia tsutsugamushi), this protein is Polyribonucleotide nucleotidyltransferase.